The following is a 341-amino-acid chain: L-threonine 3-dehydrogenase (341 aa).

Cysteine 38 contacts Zn(2+). Active-site charge relay system residues include threonine 40 and histidine 43. Zn(2+)-binding residues include histidine 63, glutamate 64, cysteine 93, cysteine 96, cysteine 99, and cysteine 107. NAD(+)-binding positions include isoleucine 175, aspartate 195, arginine 200, 262–264 (LGI), and 286–287 (IY).

The protein belongs to the zinc-containing alcohol dehydrogenase family. Homotetramer. Requires Zn(2+) as cofactor.

The protein resides in the cytoplasm. The enzyme catalyses L-threonine + NAD(+) = (2S)-2-amino-3-oxobutanoate + NADH + H(+). The protein operates within amino-acid degradation; L-threonine degradation via oxydo-reductase pathway; glycine from L-threonine: step 1/2. Its function is as follows. Catalyzes the NAD(+)-dependent oxidation of L-threonine to 2-amino-3-ketobutyrate. This Yersinia enterocolitica serotype O:8 / biotype 1B (strain NCTC 13174 / 8081) protein is L-threonine 3-dehydrogenase.